The primary structure comprises 295 residues: Nitrogenase iron protein 1 (295 aa).

13–20 (GKGGIGKS) is a binding site for ATP. Cys101 provides a ligand contact to [4Fe-4S] cluster. Arg104 bears the ADP-ribosylarginine; by dinitrogenase reductase ADP-ribosyltransferase mark. A [4Fe-4S] cluster-binding site is contributed by Cys135.

The protein belongs to the NifH/BchL/ChlL family. As to quaternary structure, homodimer. [4Fe-4S] cluster serves as cofactor. In terms of processing, the reversible ADP-ribosylation of Arg-104 inactivates the nitrogenase reductase and regulates nitrogenase activity.

The catalysed reaction is N2 + 8 reduced [2Fe-2S]-[ferredoxin] + 16 ATP + 16 H2O = H2 + 8 oxidized [2Fe-2S]-[ferredoxin] + 2 NH4(+) + 16 ADP + 16 phosphate + 6 H(+). The key enzymatic reactions in nitrogen fixation are catalyzed by the nitrogenase complex, which has 2 components: the iron protein and the molybdenum-iron protein. This is Nitrogenase iron protein 1 (nifH1) from Nostoc sp. (strain PCC 7120 / SAG 25.82 / UTEX 2576).